An 818-amino-acid polypeptide reads, in one-letter code: Protein TOC75-3, chloroplastic (818 aa).

A chloroplast-targeting transit peptide spans 1 to 79 (MAAFSVNGQL…LKNLAKPLAV (79 aa)). A compositionally biased stretch (low complexity) spans 15–41 (TSSTASTSLSSRRKFLSPSSSRLPRIS). The tract at residues 15 to 67 (TSSTASTSLSSRRKFLSPSSSRLPRISTQSPRVPSIKCSKSLPNRDTETSSKD) is disordered. Residues 57–67 (PNRDTETSSKD) show a composition bias toward basic and acidic residues. Residues 80 to 140 (ASVSSAASFF…KLFSPSPAVA (61 aa)) constitute a chloroplast; outer membrane transit peptide. POTRA domains follow at residues 141–246 (DEEQ…FAES), 247–364 (TWQS…VVEG), and 365–448 (DITQ…LKEL). Topologically, residues 141–473 (DEEQSPDWDS…GRGGAPTLAS (333 aa)) are chloroplast intermembrane. A beta stranded transmembrane segment spans residues 474–482 (FQPGGSVTF). The Cytoplasmic portion of the chain corresponds to 483 to 509 (EHRNLQGLNRSLMGSVTTSNFLNPQDD). The chain crosses the membrane as a beta stranded span at residues 510 to 518 (LSFKLEYVH). Residues 519–562 (PYLDGVYNPRNRTFKTSCFNSRKLSPVFTGGPGVEEVPPIWVDR) lie on the Chloroplast intermembrane side of the membrane. A beta stranded transmembrane segment spans residues 563-570 (AGVKANIT). Residues 571–578 (ENFTRQSK) lie on the Cytoplasmic side of the membrane. A beta stranded membrane pass occupies residues 579–586 (FTYGLVME). Residues 587-693 (EITTRDESSH…VEQGAGKSPP (107 aa)) lie on the Chloroplast intermembrane side of the membrane. Residues 694–702 (PVLVLHGHY) form a beta stranded membrane-spanning segment. The Cytoplasmic portion of the chain corresponds to 703–714 (GGCVGDLPSYDA). A beta stranded transmembrane segment spans residues 715–723 (FVLGGPYSV). Over 724–785 (RGYNMGELGA…VYRRTGQGSS (62 aa)) the chain is Chloroplast intermembrane. A beta stranded transmembrane segment spans residues 786 to 792 (YGAGVKL). Residues 793–806 (GLVRAEYAVDHNNG) are Cytoplasmic-facing. A beta stranded membrane pass occupies residues 807–814 (TGALFFRF). Residues 815 to 818 (GERY) are Chloroplast intermembrane-facing.

The protein belongs to the TOC75 family. In terms of assembly, part of the TOC core complex that includes a protein for the specific recognition of transit peptides surrounded by a ring composed of four proteins forming translocation channels, and four to five GTP-binding proteins providing energy. This core complex can interact with components of the TIC complex to form a larger import complex. Chloroplastic protein precursors such as prSS (precursor of the RuBisCO small subunit) also interact with these complexes. The TOC complex contains a specific subset of polar lipids such as digalactosyldiacylglyceride (DGDG), phosphatidylcholine (PC) and phosphatidylglycerol (PG). TOC75-3 interacts with TOC34/OEP34, TOC159/TOC86, TOC132 and TOC120. Interacts with SP1. Interacts with TIC236. Mostly expressed in young and actively dividing photosynthetic tissues and, to a lower extent, in old leaves and roots. Particularly low levels in leaves after etiolation.

The protein resides in the plastid. It is found in the chloroplast outer membrane. Functionally, essential protein. Mediates the insertion of proteins targeted to the outer membrane of chloroplasts. Required for the import of protein precursors into chloroplasts. Forms the voltage-dependent preprotein translocation channels (hydrophilic beta barrel) of the TOC complex in the chloroplastic outer membrane. The sequence is that of Protein TOC75-3, chloroplastic from Arabidopsis thaliana (Mouse-ear cress).